The sequence spans 305 residues: Acetylglutamate kinase (305 aa).

Residues 67 to 68 (GG), Arg-89, and Asn-190 contribute to the substrate site.

This sequence belongs to the acetylglutamate kinase family. ArgB subfamily.

The protein localises to the cytoplasm. It carries out the reaction N-acetyl-L-glutamate + ATP = N-acetyl-L-glutamyl 5-phosphate + ADP. The protein operates within amino-acid biosynthesis; L-arginine biosynthesis; N(2)-acetyl-L-ornithine from L-glutamate: step 2/4. Catalyzes the ATP-dependent phosphorylation of N-acetyl-L-glutamate. This is Acetylglutamate kinase from Bifidobacterium animalis subsp. lactis (strain AD011).